We begin with the raw amino-acid sequence, 316 residues long: Neutrophil-stimulating factor 1 (316 aa).

The first 21 residues, 1–21 (METSLPITVVFLIVLITGAQT), serve as a signal peptide directing secretion. The segment at 126–316 (HGEMLERMTA…WFAVSWNDRG (191 aa)) is involved in interaction with human CD47. Asparagine 169 is a glycosylation site (N-linked (GlcNAc...) asparagine).

In terms of assembly, interacts with human CD4. Interacts with human CD47; the interaction results in inhibition of phagocytosis activity of host macrophages. Female salivary gland (at protein level). Saliva (at protein level). Some expression in ovary and midgut (at protein level).

The protein resides in the secreted. Functionally, activates host neutrophils; induces expression of IL1B and CXCL2 at the bite site. Promotes activation of human CD4(+) T-cells. Inhibits phagocytosis activity of host macrophages via the interaction with CD47 receptor on their surface. Suppresses expression of pro-inflammatory cytokines, such as IFN-gamma/IFNG, IL2, TNF-alpha/TNF, IL12B, IL8/CXCL8, IL6, in host white blood cells. Reduces host polymorphonuclear neutrophil chemotaxis induced by N-formylmethionine-leucylphenylalanine (fMLF). Reduces CD11b/ITGAM expression in fMLF-induced host polymorphonuclear neutrophils. In terms of biological role, (Microbial infection) Enhances early replication of Zika virus in the host. The polypeptide is Neutrophil-stimulating factor 1 (Aedes aegypti (Yellowfever mosquito)).